The primary structure comprises 470 residues: ADAM DEC1 (470 aa).

An N-terminal signal peptide occupies residues Met1–Ala30. The propeptide occupies Ile31 to Leu205. N-linked (GlcNAc...) asparagine glycosylation is present at Asn61. Positions Phe173–Arg200 are disordered. N-linked (GlcNAc...) (complex) asparagine glycosylation is present at Asn184. Residues Lys218–Pro412 form the Peptidase M12B domain. The N-linked (GlcNAc...) asparagine glycan is linked to Asn237. Disulfide bonds link Cys328–Cys407 and Cys369–Cys374. Position 352 (His352) interacts with Zn(2+). The active site involves Glu353. Zn(2+) is bound by residues His356 and Asp362. The Disintegrin domain occupies Thr420 to Glu470. An N-linked (GlcNAc...) asparagine glycan is attached at Asn466.

Zn(2+) is required as a cofactor. As to expression, expressed highly in the small intestine and appendix, moderately in lymph node, mucosal lining of the colon, thymus, spleen and very weakly in the bone marrow. Predominantly expressed in dendritic cells (DC) of the germinal center. Weakly expressed in monocyte and highly expressed in macrophage. Absent in immature DC.

It localises to the secreted. Its function is as follows. May play an important role in the control of the immune response and during pregnancy. The polypeptide is ADAM DEC1 (ADAMDEC1) (Homo sapiens (Human)).